We begin with the raw amino-acid sequence, 276 residues long: Small ribosomal subunit protein uS3 (276 aa).

A KH type-2 domain is found at 39-110; sequence IRRETMKFFK…KINIKIKEIK (72 aa). The segment at 218–243 is disordered; the sequence is DAGQVINRKSSREKSEHFDRSRVDDR. Residues 227 to 243 are compositionally biased toward basic and acidic residues; sequence SSREKSEHFDRSRVDDR.

Belongs to the universal ribosomal protein uS3 family. In terms of assembly, part of the 30S ribosomal subunit. Forms a tight complex with proteins S10 and S14.

Binds the lower part of the 30S subunit head. Binds mRNA in the 70S ribosome, positioning it for translation. The protein is Small ribosomal subunit protein uS3 of Borrelia hermsii (strain HS1 / DAH).